A 225-amino-acid chain; its full sequence is NAD(P)H-quinone oxidoreductase subunit K, chloroplastic (225 aa).

4 residues coordinate [4Fe-4S] cluster: Cys43, Cys44, Cys108, and Cys139.

It belongs to the complex I 20 kDa subunit family. In terms of assembly, NDH is composed of at least 16 different subunits, 5 of which are encoded in the nucleus. Requires [4Fe-4S] cluster as cofactor.

The protein localises to the plastid. It localises to the chloroplast thylakoid membrane. The enzyme catalyses a plastoquinone + NADH + (n+1) H(+)(in) = a plastoquinol + NAD(+) + n H(+)(out). It carries out the reaction a plastoquinone + NADPH + (n+1) H(+)(in) = a plastoquinol + NADP(+) + n H(+)(out). In terms of biological role, NDH shuttles electrons from NAD(P)H:plastoquinone, via FMN and iron-sulfur (Fe-S) centers, to quinones in the photosynthetic chain and possibly in a chloroplast respiratory chain. The immediate electron acceptor for the enzyme in this species is believed to be plastoquinone. Couples the redox reaction to proton translocation, and thus conserves the redox energy in a proton gradient. The protein is NAD(P)H-quinone oxidoreductase subunit K, chloroplastic of Draba nemorosa (Woodland whitlowgrass).